The primary structure comprises 432 residues: EF-hand calcium-binding domain-containing protein 3 (432 aa).

EF-hand domains are found at residues 45-80 and 81-116; these read AQLE…LGMN and LNAY…KKLF. The Ca(2+) site is built by D94, D96, D98, K100, and D105. Y273 bears the Phosphotyrosine mark. The interval 394-432 is disordered; it reads NVNKTSPSNSGLSSPSDLSESDPETGRKRKRKSSRGFRQ. Residues 399 to 411 are compositionally biased toward low complexity; it reads SPSNSGLSSPSDL. The span at 420 to 432 shows a compositional bias: basic residues; sequence RKRKRKSSRGFRQ.

The polypeptide is EF-hand calcium-binding domain-containing protein 3 (Efcab3) (Rattus norvegicus (Rat)).